Reading from the N-terminus, the 197-residue chain is Short chain dehydrogenase ausX (197 aa).

4 residues coordinate NADP(+): Ile49, Asp95, Arg157, and Tyr189. Residue Tyr189 is the Proton acceptor of the active site. Tyr189 acts as the Proton donor in catalysis.

The protein belongs to the short-chain dehydrogenases/reductases (SDR) family.

It functions in the pathway secondary metabolite biosynthesis; terpenoid biosynthesis. In terms of biological role, short chain dehydrogenase; part of the gene cluster A that mediates the biosynthesis of austinol and dehydroaustinol, two fungal meroterpenoids. The first step of the pathway is the synthesis of 3,5-dimethylorsellinic acid by the polyketide synthase ausA. 3,5-dimethylorsellinic acid is then prenylated by the polyprenyl transferase ausN. Further epoxidation by the FAD-dependent monooxygenase ausM and cyclization by the probable terpene cyclase ausL lead to the formation of protoaustinoid A. Protoaustinoid A is then oxidized to spiro-lactone preaustinoid A3 by the combined action of the FAD-binding monooxygenases ausB and ausC, and the dioxygenase ausE. Acid-catalyzed keto-rearrangement and ring contraction of the tetraketide portion of preaustinoid A3 by ausJ lead to the formation of preaustinoid A4. The aldo-keto reductase ausK, with the help of ausH, is involved in the next step by transforming preaustinoid A4 into isoaustinone which is in turn hydroxylated by the P450 monooxygenase ausI to form austinolide. Finally, the cytochrome P450 monooxygenase ausG modifies austinolide to austinol. Austinol can be further modified to dehydroaustinol which forms a diffusible complex with diorcinol that initiates conidiation. Due to genetic rearrangements of the clusters and the subsequent loss of some enzymes, the end products of the Emericella nidulans austinoid biosynthesis clusters are austinol and dehydroaustinol, even if additional enzymes, such as the O-acetyltransferase ausQ and the cytochrome P450 monooxygenase ausR are still functional. The protein is Short chain dehydrogenase ausX of Emericella nidulans (strain FGSC A4 / ATCC 38163 / CBS 112.46 / NRRL 194 / M139) (Aspergillus nidulans).